A 455-amino-acid polypeptide reads, in one-letter code: Probable xyloglucan galactosyltransferase GT17 (455 aa).

Topologically, residues 1 to 34 (MTFNKRQVKINHWPEKNDKEKQKYSKNRETVKLT) are cytoplasmic. Residues 35–55 (LLTLLLLCSICFLFLTLNFPF) form a helical; Signal-anchor for type II membrane protein membrane-spanning segment. Residues 56–455 (TIEFTASIPR…QARDNVVVSL (400 aa)) are Lumenal-facing. Asn70, Asn169, Asn230, Asn390, and Asn426 each carry an N-linked (GlcNAc...) asparagine glycan.

This sequence belongs to the glycosyltransferase 47 family. Expressed in roots and hypocotyls.

It is found in the golgi apparatus membrane. Functionally, functions in xyloglucan synthesis by adding side chains to the xylosylated glucan backbone. Involved in the galactosylation of hemicellulose xyloglucan. The sequence is that of Probable xyloglucan galactosyltransferase GT17 from Arabidopsis thaliana (Mouse-ear cress).